The primary structure comprises 740 residues: Ethylene receptor 1 (740 aa).

A run of 3 helical transmembrane segments spans residues 23-43 (ISDFFIAVAYFSIPLELIYFV), 53-73 (WVLVQFGAFIVLCGATHLINL), and 95-115 (AAVSCVTALMLVHIIPDLLSV). Residues Cys-65 and His-69 each contribute to the Cu cation site. Residues 158 to 307 (DRHTILKTTL…VVADQVAVAL (150 aa)) enclose the GAF domain. Positions 350–587 (VMNHEMRTPM…TVTFVVKLGI (238 aa)) constitute a Histidine kinase domain. Residue His-353 is modified to Phosphohistidine; by autocatalysis. In terms of domain architecture, Response regulatory spans 615–732 (KVLLMDENGI…KMRNVLSKLL (118 aa)). Position 663 is a 4-aspartylphosphate (Asp-663).

It belongs to the ethylene receptor family. As to quaternary structure, homodimer; disulfide-linked. The cofactor is Cu cation. Post-translationally, activation probably requires a transfer of a phosphate group between a His in the transmitter domain and an Asp of the receiver domain.

It localises to the endoplasmic reticulum membrane. It catalyses the reaction ATP + protein L-histidine = ADP + protein N-phospho-L-histidine.. Its function is as follows. May act early in the ethylene signal transduction pathway, possibly as an ethylene receptor, or as a regulator of the pathway. The chain is Ethylene receptor 1 (ETR1) from Pelargonium hortorum (Common geranium).